Consider the following 515-residue polypeptide: Cytochrome P450 705A22 (515 aa).

A helical transmembrane segment spans residues 9–29; the sequence is FQNCFIFILIFLLTFLCFFFF. Cys454 serves as a coordination point for heme.

Belongs to the cytochrome P450 family. The cofactor is heme.

It localises to the membrane. In terms of biological role, plays a role in the gravitropic response of the inflorescence stems and roots. May affect the synthesis of flavonols that have a role in regulating auxin transport. This Arabidopsis thaliana (Mouse-ear cress) protein is Cytochrome P450 705A22.